The chain runs to 38 residues: GIFSSRKCKTPSKTFKGYCTRDSNCDTSCRYEGYPAGD.

It belongs to the DEFL family. Group IV subfamily. As to expression, distributed in the epidermal cell layer of leaves and in the subepidermal layer region of stems. Not in roots.

Its subcellular location is the secreted. It is found in the cell wall. Antimicrobial peptide. Active against Fusarium spp., Gram-positive and Gram-negative bacterial pathogens. The protein is Defensin D7 of Spinacia oleracea (Spinach).